We begin with the raw amino-acid sequence, 163 residues long: Ankyrin repeat domain-containing protein 37 (163 aa).

ANK repeat units lie at residues 29 to 58 (LGQS…DVNQ), 62 to 91 (FGEA…RIDM), and 95 to 124 (DGHT…TQDT). Residues 129-149 (QSSLHNLKETAAGVKRGQCCQ) carry the Nuclear localization signal motif.

It is found in the nucleus. The protein localises to the cytoplasm. This is Ankyrin repeat domain-containing protein 37 (ankrd37) from Xenopus tropicalis (Western clawed frog).